Reading from the N-terminus, the 290-residue chain is Glucuronoxylan 4-O-methyltransferase 2 (290 aa).

A helical transmembrane segment spans residues 8-28 (FISSKLIFICCSILVLFILFL).

It belongs to the methyltransferase superfamily. As to expression, expressed in roots, rosette leaves and stems.

It localises to the golgi apparatus membrane. It carries out the reaction glucuronoxylan D-glucuronate + n S-adenosyl-L-methionine = glucuronoxylan 4-O-methyl-D-glucuronate + n S-adenosyl-L-homocysteine + n H(+). Functionally, methyltransferase catalyzing 4-O-methylation of glucuronic acid side chains on xylan. This chain is Glucuronoxylan 4-O-methyltransferase 2 (GXM2), found in Arabidopsis thaliana (Mouse-ear cress).